The primary structure comprises 141 residues: MLSADDKKIIAQLWEKVAGHQDEFGNEALQRMFVTYPQTKTYFPHFDVHPGSEQVRSHGKKVAAALGNAVKSLDNISQALSELSNLHAYNLRVDPANFKLLSQCFQVVLAVHLGKDYTPEMHAAFDKFLSAVAAVLAEKYR.

One can recognise a Globin domain in the interval 1-141 (MLSADDKKII…VAAVLAEKYR (141 aa)). Histidine 58 and histidine 87 together coordinate heme b.

This sequence belongs to the globin family. In terms of assembly, heterotetramer of two alpha-D chains and two beta chains. In terms of tissue distribution, red blood cells.

In terms of biological role, involved in oxygen transport from the lung to the various peripheral tissues. The polypeptide is Hemoglobin subunit alpha-D (HBAD) (Anser indicus (Bar-headed goose)).